Reading from the N-terminus, the 601-residue chain is Protein FAM13C (601 aa).

2 disordered regions span residues 82-134 and 192-238; these read SMGN…PQSS and DGQV…EDLQ. Residues 98–111 show a composition bias toward basic and acidic residues; it reads ESGRNHGESQETEH. Position 130 is a phosphoserine (Ser130). Low complexity predominate over residues 200–217; sequence DPAPASTQSAPADSADPA. Position 258 is a phosphoserine (Ser258). 3 disordered regions span residues 268–304, 327–352, and 366–485; these read QRFN…KEPQ, FEQE…WMND, and KLSE…DPVS. Positions 282-294 are enriched in low complexity; it reads SSQQFMMPRSSSR. Over residues 327–342 the composition is skewed to basic and acidic residues; that stretch reads FEQEKKYRPSHGDKTS. Phosphoserine occurs at positions 405 and 406. Residues 415–446 are compositionally biased toward basic and acidic residues; that stretch reads VPEKREQTPPQDDGKGTKQDKNLIKPLYDRCR. Acidic residues predominate over residues 462 to 471; the sequence is QEEEDSDEDC.

It belongs to the FAM13 family.

The sequence is that of Protein FAM13C (Fam13c) from Mus musculus (Mouse).